Here is a 444-residue protein sequence, read N- to C-terminus: Tubulin gamma chain (444 aa).

144 to 150 (SGGTGSG) contacts GTP.

The protein belongs to the tubulin family.

It localises to the cytoplasm. Its subcellular location is the cytoskeleton. The protein localises to the microtubule organizing center. It is found in the centrosome. The protein resides in the cell junction. It localises to the hemidesmosome. Its subcellular location is the adherens junction. Functionally, tubulin is the major constituent of microtubules. The gamma chain is found at microtubule organizing centers (MTOC) such as the spindle poles or the centrosome, suggesting that it is involved in the minus-end nucleation of microtubule assembly. The sequence is that of Tubulin gamma chain (tbg-1) from Caenorhabditis elegans.